A 399-amino-acid chain; its full sequence is Stomatin-like protein 1 (399 aa).

The short motif at 6-10 (GYRAL) is the Tyrosine-type lysosomal sorting signal element. A Phosphoserine modification is found at Ser-28. The helical; Signal-anchor for type III membrane protein transmembrane segment at 58-78 (LVSVLGFLLLLLTFPISGWFA) threads the bilayer. Over 79–399 (LKIVPTYERM…KLEAVLKALK (321 aa)) the chain is Cytoplasmic. The SCP2 domain maps to 288–399 (KQPVAEGLLT…KLEAVLKALK (112 aa)).

Belongs to the band 7/mec-2 family. As to quaternary structure, interacts with STOM; may redistribute STOM from the plasma membrane to late endosomes. As to expression, expressed in dorsal root ganglion neurons.

It localises to the membrane. Its subcellular location is the cytoplasmic vesicle. It is found in the cell membrane. The protein resides in the late endosome membrane. The protein localises to the membrane raft. May play a role in cholesterol transfer to late endosomes. May play a role in modulating membrane acid-sensing ion channels. Can specifically inhibit proton-gated current of ASIC1 isoform 1. Can increase inactivation speed of ASIC3. May be involved in regulation of proton sensing in dorsal root ganglions. This chain is Stomatin-like protein 1 (Stoml1), found in Mus musculus (Mouse).